Consider the following 1798-residue polypeptide: U3 small nucleolar RNA-associated protein 10 (1798 aa).

The HEAT 1 repeat unit spans residues 583-620 (LDFQALLPFLLVTLTDPSERVRREAAAALAAVGSLYKK). 2 helical membrane passes run 942–962 (IQSGMSYLLSLTLGSLLAIVN) and 998–1018 (ALLLVAGLSVIAPELVLHSVM). HEAT repeat units follow at residues 1042 to 1079 (QTIDQVVPALIQSLRDQKRDVVSGTSELLLSFTAAFEH), 1249 to 1286 (LTLVDFLDTIEVLLERPNDELRRKVLRLLEGRLRQNPE), 1293 to 1331 (IRVLDFLPTLVDIIRNSTDILLKHAAVACIDRIAEKYGK), and 1754 to 1791 (ALLPEMLPYISELMEDEDENVEREVRKWVKQIENVLGE).

Belongs to the HEATR1/UTP10 family. Component of the ribosomal small subunit (SSU) processome.

The protein resides in the nucleus. It is found in the nucleolus. The protein localises to the membrane. Its function is as follows. Involved in nucleolar processing of pre-18S ribosomal RNA. Involved in ribosome biosynthesis. This Aspergillus fumigatus (strain ATCC MYA-4609 / CBS 101355 / FGSC A1100 / Af293) (Neosartorya fumigata) protein is U3 small nucleolar RNA-associated protein 10.